Here is a 380-residue protein sequence, read N- to C-terminus: MHMQTKLIHGGISEDATTGAVSVPIYQTSTYRQDAIGHHKGYEYSRSGNPTRFALEELIADLEGGVKGFAFASGLAGIHAVFSLLQSGDHVLLGDDVYGGTFRLFNKVLVKNGLSCTIIDTSDLSQIKKAIKPNTKALYLETPSNPLLKITDLAQCASVAKDHGLLTIVDNTFATPYYQNPLLLGADIVVHSGTKYLGGHSDVVAGLVTTNNEALAQEIAFFQNAIGGVLGPQDSWLLQRGIKTLGLRMQAHQKNALCVAEFLEKHPKVERVYYPGLPTHPNYELAKKQMRGFSGMLSFTLKNDSEATPFVESLKLFILGESLGGVESLVGVPAFMTHACIPKTQREAAGIRDGLVRLSVGIEHEQDLLEDLEQAFAKIS.

Residue K195 is modified to N6-(pyridoxal phosphate)lysine.

The protein belongs to the trans-sulfuration enzymes family. In terms of assembly, homotetramer. Pyridoxal 5'-phosphate serves as cofactor.

The protein localises to the cytoplasm. It carries out the reaction O-succinyl-L-homoserine + L-cysteine = L,L-cystathionine + succinate + H(+). Its pathway is amino-acid biosynthesis; L-methionine biosynthesis via de novo pathway; L-cystathionine from O-succinyl-L-homoserine: step 1/1. Its activity is regulated as follows. Four natural products, alpha-lapachone, 9-hydroxy-alpha-lapachone, Paulownin, and Yangambin, show strong inhibitory activities against CGS. All these four inhibitors prevent the binding of OSHS to CGS in a non-competitive fashion. These compounds are specific inhibitors against CGS from H.pylori relative to E.coli since they exhibit very low inhibition activities against CGS from E.coli. Functionally, catalyzes the formation of L-cystathionine from O-succinyl-L-homoserine (OSHS) and L-cysteine, via a gamma-replacement reaction. In the absence of thiol, catalyzes gamma-elimination to form 2-oxobutanoate, succinate and ammonia. In Helicobacter pylori (Campylobacter pylori), this protein is Cystathionine gamma-synthase (metB).